The chain runs to 726 residues: Quinolinate synthase, chloroplastic (726 aa).

Residues 1–67 constitute a chloroplast transit peptide; the sequence is MDAANLVMKS…KKPSNNSTFT (67 aa). Cysteine 133 acts as the Cysteine persulfide intermediate in catalysis. Positions 283 and 309 each coordinate iminosuccinate. Position 363 (cysteine 363) interacts with [4Fe-4S] cluster. Residues 392–394 and serine 414 contribute to the iminosuccinate site; that span reads YIN. Cysteine 487 is a binding site for [4Fe-4S] cluster. Residues 513–515 and threonine 538 each bind iminosuccinate; that span reads HFE. Position 643 (cysteine 643) interacts with [4Fe-4S] cluster.

It belongs to the quinolinate synthase family. Type 1 subfamily. As to quaternary structure, homodimer. [4Fe-4S] cluster is required as a cofactor.

The protein resides in the plastid. The protein localises to the chloroplast. The catalysed reaction is iminosuccinate + dihydroxyacetone phosphate = quinolinate + phosphate + 2 H2O + H(+). It participates in alkaloid biosynthesis; nicotine biosynthesis. Its pathway is cofactor biosynthesis; NAD(+) biosynthesis; quinolinate from iminoaspartate: step 1/1. Involved in the biosynthesis of pyridine alkaloid natural products, leading mainly to the production of anabasine, anatabine, nicotine and nornicotine, effective deterrents against herbivores with antiparasitic and pesticide properties (neurotoxins); nornicotine serves as the precursor in the synthesis of the carcinogen compound N'-nitrosonornicotine (NNN). Catalyzes the condensation of iminoaspartate with dihydroxyacetone phosphate to form quinolinate. The polypeptide is Quinolinate synthase, chloroplastic (Nicotiana tabacum (Common tobacco)).